The primary structure comprises 132 residues: MQRVTLTLDDDLLAALDALSARRGYHNRSEAVRDILRDALNQDPPSPESRRGYAVLSYVYEHEKRELASRLVATQHHHHDLSVATLHVHISHEDCLEIAVLKGDMAEVQHFADDVIAQRGVRHGHLQCLADD.

Ni(2+) contacts are provided by His76, His87, His89, and Cys95.

The protein belongs to the transcriptional regulatory CopG/NikR family. In terms of assembly, homotetramer. Requires Ni(2+) as cofactor.

Transcriptional repressor of the nikABCDE operon. Is active in the presence of excessive concentrations of intracellular nickel. This Klebsiella pneumoniae (strain 342) protein is Nickel-responsive regulator.